We begin with the raw amino-acid sequence, 438 residues long: Serine--tRNA ligase (438 aa).

Residue 235-237 participates in L-serine binding; the sequence is TAE. ATP-binding positions include 266-268 and Val-282; that span reads RKE. L-serine is bound at residue Glu-289. 355–358 contacts ATP; sequence ELVS. Thr-393 provides a ligand contact to L-serine.

This sequence belongs to the class-II aminoacyl-tRNA synthetase family. Type-1 seryl-tRNA synthetase subfamily. In terms of assembly, homodimer. The tRNA molecule binds across the dimer.

The catalysed reaction is tRNA(Ser) + L-serine + ATP = L-seryl-tRNA(Ser) + AMP + diphosphate + H(+). The enzyme catalyses tRNA(Sec) + L-serine + ATP = L-seryl-tRNA(Sec) + AMP + diphosphate + H(+). The protein operates within aminoacyl-tRNA biosynthesis; selenocysteinyl-tRNA(Sec) biosynthesis; L-seryl-tRNA(Sec) from L-serine and tRNA(Sec): step 1/1. Its function is as follows. Catalyzes the attachment of serine to tRNA(Ser). Is also able to aminoacylate tRNA(Sec) with serine, to form the misacylated tRNA L-seryl-tRNA(Sec), which will be further converted into selenocysteinyl-tRNA(Sec). The polypeptide is Serine--tRNA ligase (Helianthus annuus (Common sunflower)).